Reading from the N-terminus, the 500-residue chain is Glycerol kinase (500 aa).

Thr-13 lines the ADP pocket. Residues Thr-13, Thr-14, and Ser-15 each contribute to the ATP site. Position 13 (Thr-13) interacts with sn-glycerol 3-phosphate. Arg-17 lines the ADP pocket. Positions 83, 84, 136, and 246 each coordinate sn-glycerol 3-phosphate. Positions 83, 84, 136, 246, and 247 each coordinate glycerol. ADP is bound by residues Thr-268 and Gly-311. Residues Thr-268, Gly-311, Gln-315, and Gly-412 each coordinate ATP. 2 residues coordinate ADP: Gly-412 and Asn-416.

It belongs to the FGGY kinase family.

It catalyses the reaction glycerol + ATP = sn-glycerol 3-phosphate + ADP + H(+). It participates in polyol metabolism; glycerol degradation via glycerol kinase pathway; sn-glycerol 3-phosphate from glycerol: step 1/1. Inhibited by fructose 1,6-bisphosphate (FBP). In terms of biological role, key enzyme in the regulation of glycerol uptake and metabolism. Catalyzes the phosphorylation of glycerol to yield sn-glycerol 3-phosphate. The sequence is that of Glycerol kinase from Francisella tularensis subsp. novicida (strain U112).